Reading from the N-terminus, the 260-residue chain is Apolipoprotein A-I (260 aa).

The signal sequence occupies residues 1 to 18 (MKFAALALALLLAVGSHA). The 3 X approximate tandem repeats stretch occupies residues 32 to 63 (ARAVLDVYLTQVKDMSLRAVNQLDDPQYAEFK). Tandem repeats lie at residues 64–85 (TNLA…GSVS) and 87–107 (MTDS…ESLN). The 10 X approximate tandem repeats stretch occupies residues 64-260 (TNLAQRIEEM…EIIAASVTKS (197 aa)). A 3; half-length repeat occupies 108 to 118 (VDLEALKSSLA). 5 repeat units span residues 119–140 (PQNE…TLLT), 141–162 (PIYN…TRLE), 163–184 (PVME…AVLM), 185–206 (PMVE…EVVQ), and 207–225 (PYVQ…QAQT). The stretch at 226–236 (VDTDALRTKIT) is one 9; half-length repeat. Repeat 10 spans residues 237-260 (PLVEEIKVKMNAIFEIIAASVTKS).

Belongs to the apolipoprotein A1/A4/E family. Strong expression in liver with lower expression in intestine.

The protein resides in the secreted. Participates in the reverse transport of cholesterol from tissues to the liver for excretion by promoting cholesterol efflux from tissues and by acting as a cofactor for the lecithin cholesterol acyltransferase (LCAT). The polypeptide is Apolipoprotein A-I (apoa1) (Sparus aurata (Gilthead sea bream)).